The chain runs to 85 residues: Small ribosomal subunit protein uS17 (85 aa).

The protein belongs to the universal ribosomal protein uS17 family. In terms of assembly, part of the 30S ribosomal subunit.

Functionally, one of the primary rRNA binding proteins, it binds specifically to the 5'-end of 16S ribosomal RNA. The sequence is that of Small ribosomal subunit protein uS17 from Syntrophus aciditrophicus (strain SB).